The primary structure comprises 484 residues: uncharacterized protein (484 aa).

One can recognise an FAD-binding PCMH-type domain in the interval 47–226; the sequence is TLPIPAAVVK…TEVTVKIFKF (180 aa).

It belongs to the FAD-binding oxidoreductase/transferase type 4 family.

This is an uncharacterized protein from Escherichia coli O157:H7.